The following is a 435-amino-acid chain: tRNA modification GTPase MnmE (435 aa).

Residues R24, E85, and R124 each coordinate (6S)-5-formyl-5,6,7,8-tetrahydrofolate. Residues G220–R361 enclose the TrmE-type G domain. N230 contacts K(+). Residues N230–S235, S249–T255, and D274–G277 contribute to the GTP site. S234 provides a ligand contact to Mg(2+). S249, I251, and T254 together coordinate K(+). Mg(2+) is bound at residue T255. (6S)-5-formyl-5,6,7,8-tetrahydrofolate is bound at residue K435.

This sequence belongs to the TRAFAC class TrmE-Era-EngA-EngB-Septin-like GTPase superfamily. TrmE GTPase family. Homodimer. Heterotetramer of two MnmE and two MnmG subunits. It depends on K(+) as a cofactor.

The protein resides in the cytoplasm. Functionally, exhibits a very high intrinsic GTPase hydrolysis rate. Involved in the addition of a carboxymethylaminomethyl (cmnm) group at the wobble position (U34) of certain tRNAs, forming tRNA-cmnm(5)s(2)U34. The sequence is that of tRNA modification GTPase MnmE from Gluconacetobacter diazotrophicus (strain ATCC 49037 / DSM 5601 / CCUG 37298 / CIP 103539 / LMG 7603 / PAl5).